Here is a 234-residue protein sequence, read N- to C-terminus: 7-cyano-7-deazaguanine synthase (234 aa).

13–23 (FSGGIDSTTCL) serves as a coordination point for ATP. 4 residues coordinate Zn(2+): C197, C207, C210, and C213.

This sequence belongs to the QueC family. It depends on Zn(2+) as a cofactor.

The catalysed reaction is 7-carboxy-7-deazaguanine + NH4(+) + ATP = 7-cyano-7-deazaguanine + ADP + phosphate + H2O + H(+). It participates in purine metabolism; 7-cyano-7-deazaguanine biosynthesis. Its function is as follows. Catalyzes the ATP-dependent conversion of 7-carboxy-7-deazaguanine (CDG) to 7-cyano-7-deazaguanine (preQ(0)). In Syntrophobacter fumaroxidans (strain DSM 10017 / MPOB), this protein is 7-cyano-7-deazaguanine synthase.